The primary structure comprises 226 residues: ATP synthase F(0) complex subunit a (226 aa).

Helical transmembrane passes span 6-26, 68-88, 97-117, 138-158, 164-184, and 189-209; these read FASF…IILF, WSLM…LGLL, QLSM…VMGF, IPML…ALAV, ITAG…LSTI, and ALII…VALI.

This sequence belongs to the ATPase A chain family. As to quaternary structure, component of the ATP synthase complex composed at least of ATP5F1A/subunit alpha, ATP5F1B/subunit beta, ATP5MC1/subunit c (homooctomer), MT-ATP6/subunit a, MT-ATP8/subunit 8, ATP5ME/subunit e, ATP5MF/subunit f, ATP5MG/subunit g, ATP5MK/subunit k, ATP5MJ/subunit j, ATP5F1C/subunit gamma, ATP5F1D/subunit delta, ATP5F1E/subunit epsilon, ATP5PF/subunit F6, ATP5PB/subunit b, ATP5PD/subunit d, ATP5PO/subunit OSCP. ATP synthase complex consists of a soluble F(1) head domain (subunits alpha(3) and beta(3)) - the catalytic core - and a membrane F(0) domain - the membrane proton channel (subunits c, a, 8, e, f, g, k and j). These two domains are linked by a central stalk (subunits gamma, delta, and epsilon) rotating inside the F1 region and a stationary peripheral stalk (subunits F6, b, d, and OSCP). Interacts with DNAJC30; interaction is direct.

It localises to the mitochondrion inner membrane. It carries out the reaction H(+)(in) = H(+)(out). Functionally, subunit a, of the mitochondrial membrane ATP synthase complex (F(1)F(0) ATP synthase or Complex V) that produces ATP from ADP in the presence of a proton gradient across the membrane which is generated by electron transport complexes of the respiratory chain. ATP synthase complex consist of a soluble F(1) head domain - the catalytic core - and a membrane F(1) domain - the membrane proton channel. These two domains are linked by a central stalk rotating inside the F(1) region and a stationary peripheral stalk. During catalysis, ATP synthesis in the catalytic domain of F(1) is coupled via a rotary mechanism of the central stalk subunits to proton translocation. With the subunit c (ATP5MC1), forms the proton-conducting channel in the F(0) domain, that contains two crucial half-channels (inlet and outlet) that facilitate proton movement from the mitochondrial intermembrane space (IMS) into the matrix. Protons are taken up via the inlet half-channel and released through the outlet half-channel, following a Grotthuss mechanism. This is ATP synthase F(0) complex subunit a from Pan troglodytes (Chimpanzee).